Here is a 209-residue protein sequence, read N- to C-terminus: Uracil phosphoribosyltransferase (209 aa).

5-phospho-alpha-D-ribose 1-diphosphate is bound by residues arginine 79, arginine 104, and 131-139; that span reads DPMLATGGS. Residues valine 194 and 199–201 contribute to the uracil site; that span reads GDA. Position 200 (aspartate 200) interacts with 5-phospho-alpha-D-ribose 1-diphosphate.

This sequence belongs to the UPRTase family. Mg(2+) is required as a cofactor.

It carries out the reaction UMP + diphosphate = 5-phospho-alpha-D-ribose 1-diphosphate + uracil. Its pathway is pyrimidine metabolism; UMP biosynthesis via salvage pathway; UMP from uracil: step 1/1. Its activity is regulated as follows. Allosterically activated by GTP. Catalyzes the conversion of uracil and 5-phospho-alpha-D-ribose 1-diphosphate (PRPP) to UMP and diphosphate. This is Uracil phosphoribosyltransferase from Bacillus mycoides (strain KBAB4) (Bacillus weihenstephanensis).